The following is a 238-amino-acid chain: Ribonuclease PH (238 aa).

Phosphate contacts are provided by residues R86 and 124-126 (GTR).

This sequence belongs to the RNase PH family. As to quaternary structure, homohexameric ring arranged as a trimer of dimers.

It carries out the reaction tRNA(n+1) + phosphate = tRNA(n) + a ribonucleoside 5'-diphosphate. In terms of biological role, phosphorolytic 3'-5' exoribonuclease that plays an important role in tRNA 3'-end maturation. Removes nucleotide residues following the 3'-CCA terminus of tRNAs; can also add nucleotides to the ends of RNA molecules by using nucleoside diphosphates as substrates, but this may not be physiologically important. Probably plays a role in initiation of 16S rRNA degradation (leading to ribosome degradation) during starvation. This Salmonella gallinarum (strain 287/91 / NCTC 13346) protein is Ribonuclease PH.